Consider the following 143-residue polypeptide: Small ribosomal subunit protein bS6 (143 aa).

The segment at 95–143 is disordered; it reads GPDTEQSFIMKSKDDKGDKPERRRRDDDENGDVGVSNDSDNDGGNAEAA. Residues 105 to 121 show a composition bias toward basic and acidic residues; the sequence is KSKDDKGDKPERRRRDD.

It belongs to the bacterial ribosomal protein bS6 family.

Its function is as follows. Binds together with bS18 to 16S ribosomal RNA. The protein is Small ribosomal subunit protein bS6 of Xylella fastidiosa (strain M23).